We begin with the raw amino-acid sequence, 837 residues long: Amyloid-beta A4 precursor protein-binding family A member 1 (837 aa).

Disordered regions lie at residues Met-1–Glu-93, Tyr-238–Lys-342, and Glu-358–Lys-435. A compositionally biased stretch (acidic residues) spans Glu-23–Gln-38. Ser-78, Ser-242, Ser-246, Ser-248, Ser-263, Ser-280, and Ser-285 each carry phosphoserine. The tract at residues Tyr-226–Pro-314 is munc-18-1 binding. The segment covering Tyr-238–Glu-254 has biased composition (basic and acidic residues). Thr-305 is modified (phosphothreonine). A phosphoserine mark is found at Ser-313 and Ser-367. Thr-370 is modified (phosphothreonine). The segment at Glu-373 to Ser-436 is LIN-2/CASK binding. Over residues Pro-387–Asp-398 the composition is skewed to basic and acidic residues. The segment covering Gly-399 to Ser-418 has biased composition (low complexity). Phosphoserine is present on residues Ser-401, Ser-403, Ser-408, and Ser-568. The 187-residue stretch at Asp-457–Asp-643 folds into the PID domain. The segment at Leu-626–Tyr-641 is autoinhibitory helix linker. 2 PDZ domains span residues Asp-656–Cys-742 and Thr-747–Ala-822.

In terms of assembly, part of a multimeric complex containing STXBP1 and STX1A. Interacts with STXBP1. Also part of the brain-specific heterotrimeric complex LIN-10/X11-alpha, LIN-2/CASK, and LIN7. Component of the brain-specific heterotrimeric complex (LIN-10-LIN-2-LIN-7 complex) composed of at least APBA1, CASK, and LIN7, which associates with the motor protein KIF17 to transport vesicles along microtubules. Within the complex, interacts (via PDZ domain) with the motor protein KIF17; the interaction is direct and is required for association of KIF17 with the cargo that is to be transported. Both isoform 1 and isoform 2 bind to the cytoplasmic domain of amyloid protein (APP). Interacts (via PDZ 1 and 2 domains) with FSPB. Isoform 2, but not isoform 1, interacts (via its truncated PID domain) with active, GTP-bound RAB6A and RAB6B. In terms of tissue distribution, brain and spinal cord. Isoform 2 is expressed in testis and brain, but not detected in lung, liver or spleen.

It localises to the cytoplasm. The protein resides in the perinuclear region. The protein localises to the nucleus. Its subcellular location is the golgi apparatus. Its function is as follows. Putative function in synaptic vesicle exocytosis by binding to Munc18-1, an essential component of the synaptic vesicle exocytotic machinery. May modulate processing of the amyloid-beta precursor protein (APP) and hence formation of APP-beta. Component of the LIN-10-LIN-2-LIN-7 complex, which associates with the motor protein KIF17 to transport vesicles containing N-methyl-D-aspartate (NMDA) receptor subunit NR2B along microtubules. The chain is Amyloid-beta A4 precursor protein-binding family A member 1 (APBA1) from Homo sapiens (Human).